The primary structure comprises 87 residues: U3-theraphotoxin-Hhn1a 2 (87 aa).

The signal sequence occupies residues 1-24; that stretch reads MVNMKASMFLTFAGLVLLFVVCYA. Positions 25–52 are excised as a propeptide; the sequence is SESEEKEFPKEMLSSIFAVDDDFKQEER. 3 disulfide bridges follow: Cys54–Cys67, Cys61–Cys72, and Cys66–Cys79.

Belongs to the neurotoxin 10 (Hwtx-1) family. 51 (Hntx-8) subfamily. Hntx-8 sub-subfamily. Expressed by the venom gland.

Its subcellular location is the secreted. Functionally, ion channel inhibitor. This chain is U3-theraphotoxin-Hhn1a 2, found in Cyriopagopus hainanus (Chinese bird spider).